The sequence spans 84 residues: Small ribosomal subunit protein uS17 (84 aa).

This sequence belongs to the universal ribosomal protein uS17 family. In terms of assembly, part of the 30S ribosomal subunit.

One of the primary rRNA binding proteins, it binds specifically to the 5'-end of 16S ribosomal RNA. The polypeptide is Small ribosomal subunit protein uS17 (Karelsulcia muelleri (strain GWSS) (Sulcia muelleri)).